Here is a 503-residue protein sequence, read N- to C-terminus: Maturase K (503 aa).

This sequence belongs to the intron maturase 2 family. MatK subfamily.

The protein localises to the plastid. It localises to the chloroplast. Its function is as follows. Usually encoded in the trnK tRNA gene intron. Probably assists in splicing its own and other chloroplast group II introns. The chain is Maturase K from Eucalyptus globulus subsp. globulus (Tasmanian blue gum).